A 109-amino-acid chain; its full sequence is Ig kappa chain V region 3374 (109 aa).

The interval alanine 1 to cysteine 24 is framework-1. A complementarity-determining-1 region spans residues glutamine 25 to alanine 35. The interval tryptophan 36 to tyrosine 50 is framework-2. Residues arginine 51–serine 57 form a complementarity-determining-2 region. A framework-3 region spans residues glycine 58–cysteine 89. The interval glutamine 90 to alanine 98 is complementarity-determining-3. The framework-4 stretch occupies residues phenylalanine 99–lysine 108.

This is Ig kappa chain V region 3374 from Oryctolagus cuniculus (Rabbit).